The following is a 278-amino-acid chain: Undecaprenyl-diphosphatase (278 aa).

The next 6 helical transmembrane spans lie at 44–64 (FLEMFNIVIQLGAILAVMTIY), 84–104 (WQLWAKVVIACIPSILIAVPL), 112–132 (FNFMVPIAIALIVYGIAFIWI), 187–207 (SVAADFTFFLGIPTMFGYSGL), 224–244 (VWILLVASVTAYLVSLVVIRF), and 254–274 (FTVFGYYRIILGAILLVYAFI).

Belongs to the UppP family.

Its subcellular location is the cell membrane. It catalyses the reaction di-trans,octa-cis-undecaprenyl diphosphate + H2O = di-trans,octa-cis-undecaprenyl phosphate + phosphate + H(+). In terms of biological role, catalyzes the dephosphorylation of undecaprenyl diphosphate (UPP). Confers resistance to bacitracin. This is Undecaprenyl-diphosphatase from Streptococcus suis (strain 98HAH33).